A 547-amino-acid polypeptide reads, in one-letter code: Collagen EMF1-alpha (547 aa).

Disordered regions lie at residues 1–99 and 116–311; these read GVPG…APGV and GPDG…GGGI. A triple-helical region region spans residues 1–280; it reads GVPGPNGDVG…QGPRGGQGPK (280 aa). Low complexity-rich tracts occupy residues 27-69 and 160-175; these read QGPD…IRGQ and QGSKGVVGPKGVVGPQ. Lysine 187 is modified (allysine). Positions 219–228 are enriched in basic and acidic residues; the sequence is VKGEKGEVGD. Positions 246-271 are enriched in low complexity; it reads DAGPAGPIGDAGIQGPPGQDGPTGAQ. Gly residues predominate over residues 272–281; the sequence is GPRGGQGPKG. The tract at residues 308–336 is telopeptide; it reads GGGIILVPVNDQNPTRSPVSGSVFYRGQA. A propeptide spans 337 to 547 (C-terminal propeptide); the sequence is EETDVNLGSV…GFEMGPACFY (211 aa). The Fibrillar collagen NC1 domain maps to 343-547; sequence LGSVADVIEL…GFEMGPACFY (205 aa). Asparagine 381 and asparagine 406 each carry an N-linked (GlcNAc...) asparagine glycan.

The protein belongs to the fibrillar collagen family.

The protein resides in the secreted. It is found in the extracellular space. It localises to the extracellular matrix. In Ephydatia muelleri (Mueller's freshwater sponge), this protein is Collagen EMF1-alpha (COLF1).